The chain runs to 240 residues: ATP synthase subunit a (240 aa).

5 helical membrane-spanning segments follow: residues Leu21–Gly41, Ile78–Val98, Asp116–Ile136, Ile183–Ala203, and Phe212–Met232.

This sequence belongs to the ATPase A chain family. As to quaternary structure, F-type ATPases have 2 components, CF(1) - the catalytic core - and CF(0) - the membrane proton channel. CF(1) has five subunits: alpha(3), beta(3), gamma(1), delta(1), epsilon(1). CF(0) has three main subunits: a(1), b(2) and c(9-12). The alpha and beta chains form an alternating ring which encloses part of the gamma chain. CF(1) is attached to CF(0) by a central stalk formed by the gamma and epsilon chains, while a peripheral stalk is formed by the delta and b chains.

The protein localises to the cell membrane. Key component of the proton channel; it plays a direct role in the translocation of protons across the membrane. In Oceanobacillus iheyensis (strain DSM 14371 / CIP 107618 / JCM 11309 / KCTC 3954 / HTE831), this protein is ATP synthase subunit a.